Consider the following 140-residue polypeptide: uncharacterized protein (140 aa).

The next 2 membrane-spanning stretches (helical) occupy residues 26 to 43 and 64 to 86; these read YLDLLLVLSIIDVLTGVI and LLNFFAVILANVIDTVLNLNGVL.

The protein belongs to the bacteriophage holin family. Cp-1 holin subfamily.

The protein localises to the cell membrane. This is an uncharacterized protein from Bacillus subtilis (strain 168).